Reading from the N-terminus, the 171-residue chain is MSDPKDSILPPLKWLSDQDPPVPTHIKDWLMELGSMTRRFENHCTYIHIKPQRECFITRDKLKEEAAHLPKSTRYWLREVILMGDNQPWLLGRTVIPQETLFEHNEALINLGDVPLGRYLFSIDKLTRDYIHIGRKDTLWARRSRLRLTGKPLLLTELFLAASPLYTTNPI.

Positions 36, 78, 116, and 157 each coordinate substrate.

It belongs to the UbiC family.

The protein resides in the cytoplasm. It catalyses the reaction chorismate = 4-hydroxybenzoate + pyruvate. Its pathway is cofactor biosynthesis; ubiquinone biosynthesis. Functionally, removes the pyruvyl group from chorismate, with concomitant aromatization of the ring, to provide 4-hydroxybenzoate (4HB) for the ubiquinone pathway. The chain is Probable chorismate pyruvate-lyase from Bartonella henselae (strain ATCC 49882 / DSM 28221 / CCUG 30454 / Houston 1) (Rochalimaea henselae).